The primary structure comprises 421 residues: Putative transporter AmpG 3 (421 aa).

Transmembrane regions (helical) follow at residues 6 to 26 (YLIG…LIFF), 41 to 61 (IIGA…WSPF), 80 to 100 (WALV…KRSP), 104 to 124 (LCIT…QDIV), 139 to 159 (LSIV…LGSV), 166 to 186 (IIFG…VGPI), 230 to 250 (LLLI…PMAM), 274 to 294 (LLIM…IGIF), 297 to 317 (VLIG…LATI), 324 to 344 (FIIT…IISI), 360 to 380 (AISA…GGIC), and 388 to 408 (VFFL…YTIY).

It belongs to the major facilitator superfamily.

The protein resides in the cell inner membrane. The protein is Putative transporter AmpG 3 (ampG3) of Rickettsia prowazekii (strain Madrid E).